The sequence spans 256 residues: PHD finger protein ALFIN-LIKE 6 (256 aa).

The tract at residues 144 to 200 (SKDLSVNNNNSKSKPSGVKSRQSESLSKVAKMSSPPPKEEEEEEDESEDESEDDEQG) is disordered. The span at 146–163 (DLSVNNNNSKSKPSGVKS) shows a compositional bias: low complexity. The span at 182–199 (EEEEEEDESEDESEDDEQ) shows a compositional bias: acidic residues. The PHD-type zinc-finger motif lies at 200 to 252 (GAVCGACGDNYGTDEFWICCDACEKWFHGKCVKITPAKAEHIKHYKCPTCSNK).

Belongs to the Alfin family. Interacts with H3K4me3 and to a lesser extent with H3K4me2. Ubiquitously expressed.

Its subcellular location is the nucleus. Histone-binding component that specifically recognizes H3 tails trimethylated on 'Lys-4' (H3K4me3), which mark transcription start sites of virtually all active genes. The sequence is that of PHD finger protein ALFIN-LIKE 6 (AL6) from Arabidopsis thaliana (Mouse-ear cress).